A 547-amino-acid chain; its full sequence is Membrane protein insertase YidC (547 aa).

A run of 6 helical transmembrane segments spans residues 6 to 26, 328 to 348, 351 to 371, 425 to 445, 459 to 479, and 499 to 519; these read LILV…WQKY, VVDY…LEAI, LVGN…AVFF, LPIL…LGAV, LASA…MFVQ, and PLIF…YWVV.

It belongs to the OXA1/ALB3/YidC family. Type 1 subfamily. As to quaternary structure, interacts with the Sec translocase complex via SecD. Specifically interacts with transmembrane segments of nascent integral membrane proteins during membrane integration.

The protein localises to the cell inner membrane. Its function is as follows. Required for the insertion and/or proper folding and/or complex formation of integral membrane proteins into the membrane. Involved in integration of membrane proteins that insert both dependently and independently of the Sec translocase complex, as well as at least some lipoproteins. Aids folding of multispanning membrane proteins. In Dechloromonas aromatica (strain RCB), this protein is Membrane protein insertase YidC.